A 365-amino-acid polypeptide reads, in one-letter code: Homeobox protein knotted-1-like 7 (365 aa).

Residues Met1–Gly11 show a composition bias toward basic and acidic residues. A disordered region spans residues Met1–Leu20. One can recognise an ELK domain in the interval Ala227–Leu247. The homeobox; TALE-type DNA-binding region spans Ser248–Thr311.

The protein belongs to the TALE/KNOX homeobox family.

The protein localises to the nucleus. Functionally, probable transcription factor that may be involved in shoot formation during embryogenesis. The protein is Homeobox protein knotted-1-like 7 (OSH3) of Oryza sativa subsp. japonica (Rice).